The sequence spans 398 residues: Phosphoglycerate kinase (398 aa).

Substrate-binding positions include 23–25 (DFN), Arg-38, 61–64 (HLGK), Arg-122, and Arg-155. ATP-binding positions include Lys-206, Gly-297, Glu-328, and 354-357 (GGDS).

It belongs to the phosphoglycerate kinase family. In terms of assembly, monomer.

Its subcellular location is the cytoplasm. The catalysed reaction is (2R)-3-phosphoglycerate + ATP = (2R)-3-phospho-glyceroyl phosphate + ADP. The protein operates within carbohydrate degradation; glycolysis; pyruvate from D-glyceraldehyde 3-phosphate: step 2/5. The polypeptide is Phosphoglycerate kinase (Clostridium novyi (strain NT)).